Reading from the N-terminus, the 1729-residue chain is Zinc finger CCCH domain-containing protein 13 (1729 aa).

Disordered regions lie at residues 1–40 (MSKI…TTET) and 57–156 (CRFI…NGDI). Over residues 10–23 (VENTKTISESTSRR) the composition is skewed to polar residues. Residues 36-64 (STTETQCRNWLKTGSCLYGNTCRFIHGPS) form a C3H1-type zinc finger. A phosphoserine mark is found at serine 64 and serine 77. Residues 76 to 136 (RSPERPTGDL…IKIVKERTPE (61 aa)) are compositionally biased toward basic and acidic residues. Residues 162–196 (HELSLEMKRQKIQRELMKLEQENMDKREEIIIQKE) adopt a coiled-coil conformation. A Glycyl lysine isopeptide (Lys-Gly) (interchain with G-Cter in SUMO2) cross-link involves residue lysine 179. Residues 182–193 (QENMDKREEIII) show a composition bias toward basic and acidic residues. Disordered regions lie at residues 182 to 528 (QENM…IRDV) and 581 to 1527 (DVYQ…PISD). 4 positions are modified to phosphoserine: serine 198, serine 207, serine 209, and serine 211. Residues 204–213 (SKLSPSPSLR) show a composition bias toward low complexity. The segment covering 214 to 224 (KSSKSPKRKSS) has biased composition (basic residues). Phosphoserine is present on serine 242. Over residues 245 to 254 (LDQQRNSKGN) the composition is skewed to polar residues. Phosphothreonine is present on threonine 263. Phosphoserine is present on serine 265. Residues 283–315 (KYKVKDRIEEKPRDGKDRGRDFEKQREKRDKPR) show a composition bias toward basic and acidic residues. Phosphoserine occurs at positions 316, 318, 324, and 327. Residues 321 to 345 (QHHSPLSSRHHSSSSQSGSSIQRHS) show a composition bias toward low complexity. A phosphothreonine mark is found at threonine 353 and threonine 363. Polar residues predominate over residues 358 to 368 (YQRTLTPSLRR). Serine 369, serine 371, and serine 380 each carry phosphoserine. 2 stretches are compositionally biased toward basic and acidic residues: residues 393–528 (PMRE…IRDV) and 581–636 (DVYQ…EKGS). Polar residues predominate over residues 639–654 (TRGSQMDSHSSGSNYH). Residues 655–701 (DSWETRSSYPERDRYPERDTRDPARDSSFERRHGERDRRDNRERDQR) show a composition bias toward basic and acidic residues. A Phosphoserine modification is found at serine 704. The stretch at 706-865 (IRHQGRSEEL…KERERQREWE (160 aa)) forms a coiled coil. The segment covering 710–897 (GRSEELERDE…IPRDSHEERK (188 aa)) has biased composition (basic and acidic residues). Serine 907, serine 909, serine 913, serine 921, serine 924, serine 929, serine 949, serine 951, and serine 953 each carry phosphoserine. A compositionally biased stretch (basic and acidic residues) spans 920–938 (HSPDSDTYHSGDDKNEKHR). The segment covering 957 to 1035 (LTEDRQGRWK…GSDRAHDEKK (79 aa)) has biased composition (basic and acidic residues). Threonine 958 carries the post-translational modification Phosphothreonine. Residues 1036-1046 (KAKAPKKPVKK) show a composition bias toward basic residues. A compositionally biased stretch (basic and acidic residues) spans 1047–1065 (KKEEDVGVERGNLETHEDS). 4 positions are modified to phosphoserine: serine 1069, serine 1086, serine 1090, and serine 1093. Residues 1072–1086 (KGQKKKNIEKKRKRS) are compositionally biased toward basic residues. Residue threonine 1109 is modified to Phosphothreonine. Composition is skewed to basic and acidic residues over residues 1114-1137 (IKEE…KKEN) and 1149-1159 (PDRTEGLEAEH). Low complexity-rich tracts occupy residues 1160–1176 (TAAT…LSSL) and 1184–1218 (AAAS…TNGS). The span at 1228 to 1253 (ARGEKVEVSHVTLEDTPHRKLVDQKR) shows a compositional bias: basic and acidic residues. Residues serine 1256, serine 1259, serine 1273, and serine 1275 each carry the phosphoserine modification. Over residues 1278–1288 (SAHRSGDDQGS) the composition is skewed to basic and acidic residues. At serine 1295 the chain carries Phosphoserine. 2 stretches are compositionally biased toward basic and acidic residues: residues 1296-1351 (GSRD…DRQV) and 1359-1440 (DSRD…ERTF). 7 positions are modified to phosphoserine: serine 1427, serine 1443, serine 1447, serine 1467, serine 1470, serine 1499, and serine 1526. Composition is skewed to basic and acidic residues over residues 1447 to 1482 (SGKR…DRDL) and 1490 to 1499 (DVSKAERTES).

Belongs to the ZC3H13 family. In terms of assembly, component of the WMM complex, a N6-methyltransferase complex composed of a catalytic subcomplex, named MAC, and of an associated subcomplex, named MACOM. The MAC subcomplex is composed of METTL3 and METTL14. The MACOM subcomplex is composed of WTAP, ZC3H13, CBLL1/HAKAI, VIRMA, and, in some cases of RBM15 (RBM15 or RBM15B). Also a component of a MACOM-like complex, named WTAP complex, composed of WTAP, ZC3H13, CBLL1/HAKAI, VIRMA, RBM15, BCLAF1 and THRAP3.

It is found in the nucleus speckle. It localises to the nucleus. The protein localises to the nucleoplasm. Its function is as follows. Associated component of the WMM complex, a complex that mediates N6-methyladenosine (m6A) methylation of RNAs, a modification that plays a role in the efficiency of mRNA splicing and RNA processing. Acts as a key regulator of m6A methylation by promoting m6A methylation of mRNAs at the 3'-UTR. Controls embryonic stem cells (ESCs) pluripotency via its role in m6A methylation. In the WMM complex, anchors component of the MACOM subcomplex in the nucleus. Also required for bridging WTAP to the RNA-binding component RBM15 (RBM15 or RBM15B). The chain is Zinc finger CCCH domain-containing protein 13 from Mus musculus (Mouse).